The primary structure comprises 86 residues: Mu-theraphotoxin-Hhn1b 1 (86 aa).

An N-terminal signal peptide occupies residues 1–21; that stretch reads MKASMFLALAGLALLFVVCYA. Residues 22 to 49 constitute a propeptide that is removed on maturation; that stretch reads SESEEKEFSNELLSSVLAVDDNSKGEER. Cystine bridges form between cysteine 51–cysteine 66, cysteine 58–cysteine 73, and cysteine 65–cysteine 80. At isoleucine 84 the chain carries Isoleucine amide.

This sequence belongs to the neurotoxin 10 (Hwtx-1) family. 22 (Htx-4) subfamily. In terms of assembly, monomer. Expressed by the venom gland.

Its subcellular location is the secreted. In terms of biological role, neurotoxin that selectively inhibits neuronal tetrodotoxin-sensitive voltage-gated sodium channels (Nav) (IC(50)=44.6 nM). It is active on Nav1.2/SCN2A (IC(50)=22.4 nM), Nav1.6/SCN8A (IC(50)=50.1 nM) and Nav1.7/SCN9A (IC(50)=48.9 nM). It shows low affinity for lipid bilayers. The sequence is that of Mu-theraphotoxin-Hhn1b 1 from Cyriopagopus hainanus (Chinese bird spider).